The sequence spans 202 residues: Imidazoleglycerol-phosphate dehydratase (202 aa).

The protein belongs to the imidazoleglycerol-phosphate dehydratase family.

It is found in the cytoplasm. It catalyses the reaction D-erythro-1-(imidazol-4-yl)glycerol 3-phosphate = 3-(imidazol-4-yl)-2-oxopropyl phosphate + H2O. It functions in the pathway amino-acid biosynthesis; L-histidine biosynthesis; L-histidine from 5-phospho-alpha-D-ribose 1-diphosphate: step 6/9. This is Imidazoleglycerol-phosphate dehydratase from Sinorhizobium fredii (strain NBRC 101917 / NGR234).